The following is a 276-amino-acid chain: Shikimate dehydrogenase (NADP(+)) (276 aa).

Shikimate-binding positions include 15–17 (SKS) and Thr62. Lys66 serves as the catalytic Proton acceptor. NADP(+) is bound at residue Glu78. 2 residues coordinate shikimate: Asn87 and Asp103. Residues 127 to 131 (GAGGV), 150 to 155 (NRTHIK), and Met214 each bind NADP(+). Tyr216 serves as a coordination point for shikimate. Gly239 is an NADP(+) binding site.

Belongs to the shikimate dehydrogenase family. Homodimer.

The enzyme catalyses shikimate + NADP(+) = 3-dehydroshikimate + NADPH + H(+). It functions in the pathway metabolic intermediate biosynthesis; chorismate biosynthesis; chorismate from D-erythrose 4-phosphate and phosphoenolpyruvate: step 4/7. Its function is as follows. Involved in the biosynthesis of the chorismate, which leads to the biosynthesis of aromatic amino acids. Catalyzes the reversible NADPH linked reduction of 3-dehydroshikimate (DHSA) to yield shikimate (SA). This is Shikimate dehydrogenase (NADP(+)) from Haemophilus ducreyi (strain 35000HP / ATCC 700724).